Reading from the N-terminus, the 211-residue chain is uncharacterized protein (211 aa).

Helical transmembrane passes span 21–38 (WYVI…ASEI), 53–75 (WGMD…YAAV), 82–104 (TAYL…MGVA), 124–146 (IFYA…AANV), 159–178 (PLLI…YWVY), and 188–210 (AVSF…LMEW).

It localises to the cell membrane. This is an uncharacterized protein from Archaeoglobus fulgidus (strain ATCC 49558 / DSM 4304 / JCM 9628 / NBRC 100126 / VC-16).